The sequence spans 257 residues: Snake venom serine protease KN9 (257 aa).

Positions 1–18 (MVLIRVLANLLILQLSYA) are cleaved as a signal peptide. Residues 19–24 (QKSSEL) constitute a propeptide that is removed on maturation. In terms of domain architecture, Peptidase S1 spans 25–248 (VVGGDECNIN…HLDWIKSIIA (224 aa)). 5 cysteine pairs are disulfide-bonded: Cys31-Cys162, Cys49-Cys65, Cys141-Cys209, Cys173-Cys188, and Cys199-Cys224. His64 serves as the catalytic Charge relay system. N-linked (GlcNAc...) asparagine glycosylation is present at Asn102. The active-site Charge relay system is Asp109. N-linked (GlcNAc...) asparagine glycans are attached at residues Asn120 and Asn121. Ser203 (charge relay system) is an active-site residue.

This sequence belongs to the peptidase S1 family. Snake venom subfamily. As to quaternary structure, monomer. In terms of tissue distribution, expressed by the venom gland.

It localises to the secreted. In terms of biological role, snake venom serine protease that may act in the hemostasis system of the prey. This chain is Snake venom serine protease KN9, found in Trimeresurus stejnegeri (Chinese green tree viper).